The sequence spans 113 residues: Putative pterin-4-alpha-carbinolamine dehydratase (113 aa).

The protein belongs to the pterin-4-alpha-carbinolamine dehydratase family.

It carries out the reaction (4aS,6R)-4a-hydroxy-L-erythro-5,6,7,8-tetrahydrobiopterin = (6R)-L-erythro-6,7-dihydrobiopterin + H2O. This chain is Putative pterin-4-alpha-carbinolamine dehydratase, found in Chlorobium limicola (strain DSM 245 / NBRC 103803 / 6330).